Consider the following 246-residue polypeptide: MEVIKVGGEVLDRVEDLARVIDDSILVHGGGPEVSDVMERMGLEPRFVRGLRVTDRETLQVVMMVLAGLVNKRLVAELRSEGINALGLSGVDGGLLIAEKRSEVVDGEEVDLGYVGDVKRVNAELLESLLDAGYVPVVAPLGAGEDGTVYNVNADTAAGAIAGAVRADRLVLLTDVPGVLEDLDDPETLIERVRPEDVEELEEKGIVTGGMVPKLEAAKMAVEAGCREAVITNLEGLLEGRGTIVR.

Residues 30-31, arginine 52, and asparagine 151 contribute to the substrate site; that span reads GG.

This sequence belongs to the acetylglutamate kinase family. ArgB subfamily.

The protein localises to the cytoplasm. It catalyses the reaction N-acetyl-L-glutamate + ATP = N-acetyl-L-glutamyl 5-phosphate + ADP. It participates in amino-acid biosynthesis; L-arginine biosynthesis; N(2)-acetyl-L-ornithine from L-glutamate: step 2/4. Its function is as follows. Catalyzes the ATP-dependent phosphorylation of N-acetyl-L-glutamate. The polypeptide is Acetylglutamate kinase (Methanopyrus kandleri (strain AV19 / DSM 6324 / JCM 9639 / NBRC 100938)).